We begin with the raw amino-acid sequence, 780 residues long: ATP-dependent 6-phosphofructokinase, liver type (780 aa).

Alanine 2 carries the N-acetylalanine modification. Residues 2–390 (AAVDLEKLRA…NWNIYKLLAH (389 aa)) are N-terminal catalytic PFK domain 1. ATP-binding positions include glycine 25, 88 to 89 (RC), and 118 to 121 (GDGS). Aspartate 119 provides a ligand contact to Mg(2+). Residues 164–166 (SID), arginine 201, 208–210 (MGR), glutamate 264, arginine 292, and 298–301 (HVQR) contribute to the substrate site. The active-site Proton acceptor is the aspartate 166. Serine 377 is subject to Phosphoserine. The tract at residues 391–400 (QKPPKEKSNF) is interdomain linker. Residues 401–780 (SLAILNVGAP…RRTLSMDKGF (380 aa)) are C-terminal regulatory PFK domain 2. Residues arginine 470, 527-531 (TISNN), arginine 565, 572-574 (MGG), and glutamate 628 each bind beta-D-fructose 2,6-bisphosphate. O-linked (GlcNAc) serine glycosylation occurs at serine 529. The residue at position 640 (tyrosine 640) is a Phosphotyrosine. Beta-D-fructose 2,6-bisphosphate contacts are provided by residues arginine 654, 660–663 (HLQQ), and arginine 734. Serine 775 bears the Phosphoserine mark.

It belongs to the phosphofructokinase type A (PFKA) family. ATP-dependent PFK group I subfamily. Eukaryotic two domain clade 'E' sub-subfamily. Homo- and heterotetramers. Phosphofructokinase (PFK) enzyme functions as a tetramer composed of different combinations of 3 types of subunits, called PFKM (where M stands for Muscle), PFKL (Liver) and PFKP (Platelet). The composition of the PFK tetramer differs according to the tissue type it is present in. In muscles, it is composed of 4 PFKM subunits (also called M4). In the liver, the predominant form is a tetramer of PFKL subunits (L4). In erythrocytes, both PFKM and PFKL subunits randomly tetramerize to form M4, L4 and other combinations (ML3, M2L2, M3L). The kinetic and regulatory properties of the tetrameric enzyme are dependent on the subunit composition, hence can vary across tissues. Mg(2+) serves as cofactor. In terms of processing, glcNAcylation at Ser-529 by OGT decreases enzyme activity, leading to redirect glucose flux through the oxidative pentose phosphate pathway. Glycosylation is stimulated by both hypoxia and glucose deprivation.

The protein localises to the cytoplasm. The catalysed reaction is beta-D-fructose 6-phosphate + ATP = beta-D-fructose 1,6-bisphosphate + ADP + H(+). It functions in the pathway carbohydrate degradation; glycolysis; D-glyceraldehyde 3-phosphate and glycerone phosphate from D-glucose: step 3/4. Allosterically activated by ADP, AMP, or fructose 2,6-bisphosphate, and allosterically inhibited by ATP or citrate. GlcNAcylation by OGT overcomes allosteric regulation. Functionally, catalyzes the phosphorylation of D-fructose 6-phosphate to fructose 1,6-bisphosphate by ATP, the first committing step of glycolysis. Negatively regulates the phagocyte oxidative burst in response to bacterial infection by controlling cellular NADPH biosynthesis and NADPH oxidase-derived reactive oxygen species. Upon macrophage activation, drives the metabolic switch toward glycolysis, thus preventing glucose turnover that produces NADPH via pentose phosphate pathway. This chain is ATP-dependent 6-phosphofructokinase, liver type, found in Homo sapiens (Human).